The primary structure comprises 116 residues: MKYSGYHLVIDLFGCNFDQLENTEYIIEMLKKLARALDTKIVAKAFHKFHPQGFSGALIISESHITIHTWPEDAYIGIDIFTCSKCFDPRKIVAYLKENLIFKKVEIKEILRGKID.

Catalysis depends on serine 63, which acts as the Schiff-base intermediate with substrate; via pyruvic acid. Pyruvic acid (Ser); by autocatalysis is present on serine 63. Histidine 68 functions as the Proton acceptor; for processing activity in the catalytic mechanism. The Proton donor; for catalytic activity role is filled by cysteine 83.

It belongs to the prokaryotic AdoMetDC family. Type 1 subfamily. Heterotetramer of two alpha and two beta chains arranged as a dimer of alpha/beta heterodimers. It depends on pyruvate as a cofactor. Is synthesized initially as an inactive proenzyme. Formation of the active enzyme involves a self-maturation process in which the active site pyruvoyl group is generated from an internal serine residue via an autocatalytic post-translational modification. Two non-identical subunits are generated from the proenzyme in this reaction, and the pyruvate is formed at the N-terminus of the alpha chain, which is derived from the carboxyl end of the proenzyme. The post-translation cleavage follows an unusual pathway, termed non-hydrolytic serinolysis, in which the side chain hydroxyl group of the serine supplies its oxygen atom to form the C-terminus of the beta chain, while the remainder of the serine residue undergoes an oxidative deamination to produce ammonia and the pyruvoyl group blocking the N-terminus of the alpha chain.

It catalyses the reaction S-adenosyl-L-methionine + H(+) = S-adenosyl 3-(methylsulfanyl)propylamine + CO2. It functions in the pathway amine and polyamine biosynthesis; S-adenosylmethioninamine biosynthesis; S-adenosylmethioninamine from S-adenosyl-L-methionine: step 1/1. Catalyzes the decarboxylation of S-adenosylmethionine to S-adenosylmethioninamine (dcAdoMet), the propylamine donor required for the synthesis of the polyamines spermine and spermidine from the diamine putrescine. This is S-adenosylmethionine decarboxylase proenzyme from Clostridium botulinum (strain ATCC 19397 / Type A).